The sequence spans 228 residues: MITPLAPSTPSPVLTPIEARVLGTLMEKARTVPDSYPLTLNTLLLGCNQKSSREPLMELTEADVAAALNTLKEAHLVRESSGSRTTRFEHNFQRGIGVYEQAAVLLGLLMLRGPQTAGELRLNTERWYKFADISSVEGFLEELQDRSAEKGGPLVVKLARGPGTREQRWAHLLCGPVDATQTGLGRSSEGLPGNTAERLERLESELANLRETVQKLCAELGVSPPEQV.

The protein belongs to the UPF0502 family.

In Albidiferax ferrireducens (strain ATCC BAA-621 / DSM 15236 / T118) (Rhodoferax ferrireducens), this protein is UPF0502 protein Rfer_1648.